Consider the following 138-residue polypeptide: Nucleoside diphosphate kinase (138 aa).

Lysine 9, phenylalanine 57, arginine 85, threonine 91, arginine 102, and asparagine 112 together coordinate ATP. Histidine 115 functions as the Pros-phosphohistidine intermediate in the catalytic mechanism.

The protein belongs to the NDK family. Homotetramer. Mg(2+) serves as cofactor.

It localises to the cytoplasm. It carries out the reaction a 2'-deoxyribonucleoside 5'-diphosphate + ATP = a 2'-deoxyribonucleoside 5'-triphosphate + ADP. The enzyme catalyses a ribonucleoside 5'-diphosphate + ATP = a ribonucleoside 5'-triphosphate + ADP. Major role in the synthesis of nucleoside triphosphates other than ATP. The ATP gamma phosphate is transferred to the NDP beta phosphate via a ping-pong mechanism, using a phosphorylated active-site intermediate. This Deinococcus geothermalis (strain DSM 11300 / CIP 105573 / AG-3a) protein is Nucleoside diphosphate kinase.